A 476-amino-acid chain; its full sequence is Ribulose bisphosphate carboxylase large chain (476 aa).

The substrate site is built by asparagine 124 and threonine 174. The active-site Proton acceptor is lysine 176. Lysine 178 contributes to the substrate binding site. Mg(2+) is bound by residues lysine 202, aspartate 204, and glutamate 205. N6-carboxylysine is present on lysine 202. Catalysis depends on histidine 295, which acts as the Proton acceptor. Substrate-binding residues include arginine 296, histidine 328, and serine 380.

The protein belongs to the RuBisCO large chain family. Type I subfamily. In terms of assembly, heterohexadecamer of 8 large chains and 8 small chains; disulfide-linked. The disulfide link is formed within the large subunit homodimers. The cofactor is Mg(2+). Post-translationally, the disulfide bond which can form in the large chain dimeric partners within the hexadecamer appears to be associated with oxidative stress and protein turnover.

It is found in the carboxysome. It carries out the reaction 2 (2R)-3-phosphoglycerate + 2 H(+) = D-ribulose 1,5-bisphosphate + CO2 + H2O. The enzyme catalyses D-ribulose 1,5-bisphosphate + O2 = 2-phosphoglycolate + (2R)-3-phosphoglycerate + 2 H(+). Its function is as follows. RuBisCO catalyzes two reactions: the carboxylation of D-ribulose 1,5-bisphosphate, the primary event in carbon dioxide fixation, as well as the oxidative fragmentation of the pentose substrate in the photorespiration process. Both reactions occur simultaneously and in competition at the same active site. The chain is Ribulose bisphosphate carboxylase large chain from Nostoc punctiforme (strain ATCC 29133 / PCC 73102).